Consider the following 306-residue polypeptide: Acetyl-coenzyme A carboxylase carboxyl transferase subunit beta (306 aa).

A CoA carboxyltransferase N-terminal domain is found at 25-294 (LWIKCPETGE…TVVGANDDKT (270 aa)).

The protein belongs to the AccD/PCCB family. Acetyl-CoA carboxylase is a heterohexamer composed of biotin carboxyl carrier protein (AccB), biotin carboxylase (AccC) and two subunits each of ACCase subunit alpha (AccA) and ACCase subunit beta (AccD).

It localises to the cytoplasm. The catalysed reaction is N(6)-carboxybiotinyl-L-lysyl-[protein] + acetyl-CoA = N(6)-biotinyl-L-lysyl-[protein] + malonyl-CoA. It functions in the pathway lipid metabolism; malonyl-CoA biosynthesis; malonyl-CoA from acetyl-CoA: step 1/1. Component of the acetyl coenzyme A carboxylase (ACC) complex. Biotin carboxylase (BC) catalyzes the carboxylation of biotin on its carrier protein (BCCP) and then the CO(2) group is transferred by the transcarboxylase to acetyl-CoA to form malonyl-CoA. The sequence is that of Acetyl-coenzyme A carboxylase carboxyl transferase subunit beta from Allorhizobium ampelinum (strain ATCC BAA-846 / DSM 112012 / S4) (Agrobacterium vitis (strain S4)).